The following is a 252-amino-acid chain: Receptor expression-enhancing protein 2 (252 aa).

2 helical membrane passes run 1 to 21 and 35 to 55; these read MVSW…YPAY and YVKW…ETLT. Serine 150 is modified (phosphoserine). The disordered stretch occupies residues 165–252; the sequence is LQRPDGRLRP…KKTSGGGDSA (88 aa). Residues 203–217 are compositionally biased toward basic and acidic residues; sequence SRTEASEDDMGDKAP.

This sequence belongs to the DP1 family. Interacts with odorant receptor proteins. Detected in brain, heart and skeletal muscle, and at low levels in placenta, kidney and pancreas. Expressed in circumvallate papillae.

Its subcellular location is the membrane. Its function is as follows. Required for endoplasmic reticulum (ER) network formation, shaping and remodeling. May enhance the cell surface expression of odorant receptors. The protein is Receptor expression-enhancing protein 2 (REEP2) of Homo sapiens (Human).